The chain runs to 324 residues: Malate dehydrogenase (324 aa).

NAD(+) contacts are provided by residues 20–25 and Asp44; that span reads GAGNVG. Substrate contacts are provided by Arg93 and Arg99. NAD(+) is bound by residues Asn106 and 129-131; that span reads VTN. Residues Asn131 and Arg162 each contribute to the substrate site. His186 serves as the catalytic Proton acceptor.

It belongs to the LDH/MDH superfamily. MDH type 3 family.

It catalyses the reaction (S)-malate + NAD(+) = oxaloacetate + NADH + H(+). Catalyzes the reversible oxidation of malate to oxaloacetate. This Synechocystis sp. (strain ATCC 27184 / PCC 6803 / Kazusa) protein is Malate dehydrogenase.